A 332-amino-acid chain; its full sequence is Tetraacyldisaccharide 4'-kinase (332 aa).

55–62 (GVGGSGKT) is a binding site for ATP.

This sequence belongs to the LpxK family.

It catalyses the reaction a lipid A disaccharide + ATP = a lipid IVA + ADP + H(+). It participates in glycolipid biosynthesis; lipid IV(A) biosynthesis; lipid IV(A) from (3R)-3-hydroxytetradecanoyl-[acyl-carrier-protein] and UDP-N-acetyl-alpha-D-glucosamine: step 6/6. Functionally, transfers the gamma-phosphate of ATP to the 4'-position of a tetraacyldisaccharide 1-phosphate intermediate (termed DS-1-P) to form tetraacyldisaccharide 1,4'-bis-phosphate (lipid IVA). This Acidithiobacillus ferrooxidans (strain ATCC 53993 / BNL-5-31) (Leptospirillum ferrooxidans (ATCC 53993)) protein is Tetraacyldisaccharide 4'-kinase.